A 104-amino-acid chain; its full sequence is Nucleoid-associated protein OB0030 (104 aa).

The tract at residues 1 to 23 (MKGNMNNMMKQMQKMQKKMMQAQ) is disordered.

This sequence belongs to the YbaB/EbfC family. As to quaternary structure, homodimer.

Its subcellular location is the cytoplasm. It is found in the nucleoid. Binds to DNA and alters its conformation. May be involved in regulation of gene expression, nucleoid organization and DNA protection. This Oceanobacillus iheyensis (strain DSM 14371 / CIP 107618 / JCM 11309 / KCTC 3954 / HTE831) protein is Nucleoid-associated protein OB0030.